Reading from the N-terminus, the 390-residue chain is Tryptophan synthase beta chain (390 aa).

Residue Lys-90 is modified to N6-(pyridoxal phosphate)lysine.

This sequence belongs to the TrpB family. As to quaternary structure, tetramer of two alpha and two beta chains. Requires pyridoxal 5'-phosphate as cofactor.

The catalysed reaction is (1S,2R)-1-C-(indol-3-yl)glycerol 3-phosphate + L-serine = D-glyceraldehyde 3-phosphate + L-tryptophan + H2O. It functions in the pathway amino-acid biosynthesis; L-tryptophan biosynthesis; L-tryptophan from chorismate: step 5/5. The beta subunit is responsible for the synthesis of L-tryptophan from indole and L-serine. The sequence is that of Tryptophan synthase beta chain from Bacteroides fragilis (strain ATCC 25285 / DSM 2151 / CCUG 4856 / JCM 11019 / LMG 10263 / NCTC 9343 / Onslow / VPI 2553 / EN-2).